The following is a 355-amino-acid chain: Oligopeptide transport ATP-binding protein AmiE (355 aa).

The ABC transporter domain occupies 9-260; that stretch reads LTARDIVVEF…PRHPYTWSLL (252 aa). 45–52 contacts ATP; that stretch reads GESGSGKS.

The protein belongs to the ABC transporter superfamily.

It localises to the cell membrane. Its function is as follows. Part of the binding-protein-dependent transport system for oligopeptides. Probably responsible for energy coupling to the transport system. This is Oligopeptide transport ATP-binding protein AmiE (amiE) from Streptococcus pneumoniae serotype 4 (strain ATCC BAA-334 / TIGR4).